We begin with the raw amino-acid sequence, 399 residues long: C-type lectin domain family 4 member M (399 aa).

Topologically, residues 1 to 49 (MSDSKEQRVQPLGLLEEDPTTSGIRLFPRDFQFQQTHGHKSSTGCLGHG) are cytoplasmic. The Endocytosis signal motif lies at 14-15 (LL). Residues 50-70 (PLVLQLLSFTLLAGVLVAILV) form a helical; Signal-anchor for type II membrane protein membrane-spanning segment. Over 71–399 (QVYKVPSSLS…KKPTACFRDE (329 aa)) the chain is Extracellular. Asn-92 carries N-linked (GlcNAc...) asparagine glycosylation. A run of 7 repeats spans residues 108–130 (KLQE…PEKS), 131–153 (TLQE…PEKS), 154–176 (RLQE…PEKS), 177–199 (KQQE…PEKS), 200–222 (KQQE…PEKS), 223–245 (KQQE…PDQS), and 246–268 (KQQQ…CCRC). The tract at residues 108–269 (KLQEIYQELI…AFERLCCRCP (162 aa)) is 7 X approximate tandem repeats. 4 disulfides stabilise this stretch: Cys-265-Cys-395, Cys-268-Cys-279, Cys-296-Cys-389, and Cys-368-Cys-381. In terms of domain architecture, C-type lectin spans 274–390 (FFQGNCYFIS…CNVDNYWICK (117 aa)). Positions 359, 361, 363, 366, 377, and 378 each coordinate Ca(2+). N-linked (GlcNAc...) asparagine glycosylation is present at Asn-361.

Homotetramer.

Its subcellular location is the membrane. Its function is as follows. Probable pathogen-recognition receptor involved in peripheral immune surveillance in liver. May mediate the endocytosis of pathogens which are subsequently degraded in lysosomal compartments. Probably recognizes in a calcium-dependent manner high mannose N-linked oligosaccharides in a variety of pathogen antigens. Is a receptor for ICAM3, probably by binding to mannose-like carbohydrates. This chain is C-type lectin domain family 4 member M (CLEC4M), found in Hylobates lar (Lar gibbon).